The following is a 212-amino-acid chain: Urease accessory protein UreG (212 aa).

15–22 (GPVGSGKT) serves as a coordination point for GTP.

Belongs to the SIMIBI class G3E GTPase family. UreG subfamily. In terms of assembly, homodimer. UreD, UreF and UreG form a complex that acts as a GTP-hydrolysis-dependent molecular chaperone, activating the urease apoprotein by helping to assemble the nickel containing metallocenter of UreC. The UreE protein probably delivers the nickel.

The protein resides in the cytoplasm. In terms of biological role, facilitates the functional incorporation of the urease nickel metallocenter. This process requires GTP hydrolysis, probably effectuated by UreG. This chain is Urease accessory protein UreG, found in Opitutus terrae (strain DSM 11246 / JCM 15787 / PB90-1).